The following is a 200-amino-acid chain: NADH-quinone oxidoreductase subunit C (200 aa).

It belongs to the complex I 30 kDa subunit family. In terms of assembly, NDH-1 is composed of 14 different subunits. Subunits NuoB, C, D, E, F, and G constitute the peripheral sector of the complex.

The protein localises to the cell inner membrane. It catalyses the reaction a quinone + NADH + 5 H(+)(in) = a quinol + NAD(+) + 4 H(+)(out). NDH-1 shuttles electrons from NADH, via FMN and iron-sulfur (Fe-S) centers, to quinones in the respiratory chain. The immediate electron acceptor for the enzyme in this species is believed to be ubiquinone. Couples the redox reaction to proton translocation (for every two electrons transferred, four hydrogen ions are translocated across the cytoplasmic membrane), and thus conserves the redox energy in a proton gradient. The protein is NADH-quinone oxidoreductase subunit C of Ralstonia pickettii (strain 12J).